The chain runs to 232 residues: Ubiquinone biosynthesis O-methyltransferase (232 aa).

The S-adenosyl-L-methionine site is built by Arg36, Gly55, Asp76, and Leu120.

The protein belongs to the methyltransferase superfamily. UbiG/COQ3 family.

The enzyme catalyses a 3-demethylubiquinol + S-adenosyl-L-methionine = a ubiquinol + S-adenosyl-L-homocysteine + H(+). The catalysed reaction is a 3-(all-trans-polyprenyl)benzene-1,2-diol + S-adenosyl-L-methionine = a 2-methoxy-6-(all-trans-polyprenyl)phenol + S-adenosyl-L-homocysteine + H(+). It functions in the pathway cofactor biosynthesis; ubiquinone biosynthesis. Functionally, O-methyltransferase that catalyzes the 2 O-methylation steps in the ubiquinone biosynthetic pathway. This Pseudomonas fluorescens (strain SBW25) protein is Ubiquinone biosynthesis O-methyltransferase.